The sequence spans 496 residues: Acetyltransferase adrJ (496 aa).

Active-site proton acceptor residues include histidine 174 and aspartate 421.

The protein belongs to the plant acyltransferase family. As to quaternary structure, monomer.

It participates in secondary metabolite biosynthesis; terpenoid biosynthesis. Acetyltransferase; part of the gene cluster that mediates the biosynthesis of andrastins, meroterpenoid compounds that exhibit inhibitory activity against ras farnesyltransferase, suggesting that they could be promising leads for antitumor agents. The first step of the pathway is the synthesis of 3,5-dimethylorsellinic acid (DMOA) by the polyketide synthase adrD via condensation of one acetyl-CoA starter unit with 3 malonyl-CoA units and 2 methylations. DMAO is then converted to farnesyl-DMAO by the prenyltransferase adrG. The methyltransferase adrK catalyzes the methylation of the carboxyl group of farnesyl-DMAO to farnesyl-DMAO methyl ester which is further converted to epoxyfarnesyl-DMAO methyl ester by the FAD-dependent monooxygenase adrH. The terpene cyclase adrI then catalyzes the carbon skeletal rearrangement to generate the andrastin E, the first compound in the pathway having the andrastin scaffold, with the tetracyclic ring system. The post-cyclization tailoring enzymes adrF, adrE, adrJ, and adrA, are involved in the conversion of andrastin E into andrastin A. The short chain dehydrogenase adrF is responsible for the oxidation of the C-3 a hydroxyl group of andrastin E to yield the corresponding ketone, andrastin D. The ketoreductase adrE stereoselectively reduces the carbonyl moiety to reverse the stereochemistry of the C-3 position to yield andrastin F. The acetyltransferase adrJ is the acetyltransferase that attaches the acetyl group to the C-3 hydroxyl group of andrastin F to yield andrastin C. Finally, the cytochrome P450 monooxygenase adrA catalyzes two sequential oxidation reactions of the C-23 methyl group, to generate the corresponding alcohol andrastin B, and aldehyde andrastin A. This is Acetyltransferase adrJ from Penicillium roqueforti.